We begin with the raw amino-acid sequence, 138 residues long: Large-conductance mechanosensitive channel (138 aa).

Helical transmembrane passes span Val-15 to Val-35, Ile-38 to Gln-58, and Gly-80 to Val-100.

Belongs to the MscL family. Homopentamer.

Its subcellular location is the cell inner membrane. Channel that opens in response to stretch forces in the membrane lipid bilayer. May participate in the regulation of osmotic pressure changes within the cell. The polypeptide is Large-conductance mechanosensitive channel (Brucella ovis (strain ATCC 25840 / 63/290 / NCTC 10512)).